The sequence spans 262 residues: Short-chain Z-isoprenyl diphosphate synthase (262 aa).

Residue Asp-40 is part of the active site. Asp-40 is a binding site for Mg(2+). Substrate-binding positions include 41–44 (GNRR), Trp-45, and 86–88 (STE). Asn-89 serves as the catalytic Proton acceptor. Substrate contacts are provided by residues Arg-92, Arg-211, and 217–219 (RLS). Mg(2+) is bound at residue Glu-230.

This sequence belongs to the UPP synthase family. Z-FPP synthase subfamily. Mg(2+) is required as a cofactor.

The catalysed reaction is isopentenyl diphosphate + (2E)-geranyl diphosphate = (2Z,6E)-farnesyl diphosphate + diphosphate. The protein operates within phospholipid metabolism; decaprenyl phosphate biosynthesis. Generates Z-farnesyl diphosphate (Z-FPP) from isopentenyl pyrophosphate (IPP). Z-FPP is the precursor of decaprenyl diphosphate, which has a central role in the biosynthesis of the mycobacterial cell wall. This Mycobacterium bovis (strain ATCC BAA-935 / AF2122/97) protein is Short-chain Z-isoprenyl diphosphate synthase.